Consider the following 203-residue polypeptide: Putative 3-methyladenine DNA glycosylase (203 aa).

The protein belongs to the DNA glycosylase MPG family.

This is Putative 3-methyladenine DNA glycosylase from Clostridium botulinum (strain ATCC 19397 / Type A).